The chain runs to 78 residues: RNA-binding protein Hfq (78 aa).

The 61-residue stretch at 9–69 (DHFLNQLRKE…ISTFAPQRNV (61 aa)) folds into the Sm domain.

Belongs to the Hfq family. As to quaternary structure, homohexamer.

In terms of biological role, RNA chaperone that binds small regulatory RNA (sRNAs) and mRNAs to facilitate mRNA translational regulation in response to envelope stress, environmental stress and changes in metabolite concentrations. Also binds with high specificity to tRNAs. This Halalkalibacterium halodurans (strain ATCC BAA-125 / DSM 18197 / FERM 7344 / JCM 9153 / C-125) (Bacillus halodurans) protein is RNA-binding protein Hfq.